The primary structure comprises 202 residues: MSFVVALTGGIASGKTTVANLFHDQFGIDLVDADVIARDVVKPETEGLKAIAAHFGQAILHPDGSLNRAALRERIFAAPNEKAWLNQLLHPMIRQGMRNALTQTTSPYALLIVPLLVENQLQTMADRVLVVDVDEKIQIERTMARDKVSREQAEAILAAQASRAQRLAIADDVLKNDAENQKLLPQITLLHQKYLAMSRQNL.

The 198-residue stretch at 4-201 (VVALTGGIAS…QKYLAMSRQN (198 aa)) folds into the DPCK domain. 12-17 (ASGKTT) serves as a coordination point for ATP.

The protein belongs to the CoaE family.

It is found in the cytoplasm. The enzyme catalyses 3'-dephospho-CoA + ATP = ADP + CoA + H(+). Its pathway is cofactor biosynthesis; coenzyme A biosynthesis; CoA from (R)-pantothenate: step 5/5. Catalyzes the phosphorylation of the 3'-hydroxyl group of dephosphocoenzyme A to form coenzyme A. The protein is Dephospho-CoA kinase of Vibrio cholerae serotype O1 (strain ATCC 39315 / El Tor Inaba N16961).